The following is a 1577-amino-acid chain: Pentafunctional AROM polypeptide (1577 aa).

The interval 1–392 (MASVGLEKVN…YGTSAHVVSD (392 aa)) is 3-dehydroquinate synthase. Residues 80 to 83 (ETYK), 111 to 113 (GGV), and Asp-116 contribute to the NAD(+) site. Position 127 (Arg-127) interacts with 7-phospho-2-dehydro-3-deoxy-D-arabino-heptonate. 136–137 (TS) contributes to the NAD(+) binding site. Residues Asp-143 and Lys-149 each coordinate 7-phospho-2-dehydro-3-deoxy-D-arabino-heptonate. Lys-158 serves as a coordination point for NAD(+). 7-phospho-2-dehydro-3-deoxy-D-arabino-heptonate is bound at residue Asn-159. NAD(+)-binding positions include 176 to 179 (WLET) and Asn-187. Glu-191 is a binding site for Zn(2+). 7-phospho-2-dehydro-3-deoxy-D-arabino-heptonate-binding positions include 191 to 194 (EVIK) and Lys-258. The Proton acceptor; for 3-dehydroquinate synthase activity role is filled by Glu-268. Residues 272–276 (RNLLN) and His-279 contribute to the 7-phospho-2-dehydro-3-deoxy-D-arabino-heptonate site. His-279 lines the Zn(2+) pocket. Catalysis depends on His-283, which acts as the Proton acceptor; for 3-dehydroquinate synthase activity. His-295 and Lys-364 together coordinate 7-phospho-2-dehydro-3-deoxy-D-arabino-heptonate. Zn(2+) is bound at residue His-295. The tract at residues 405 to 863 (VYPFTDVRSS…WDVLHSRLGA (459 aa)) is EPSP synthase. Residue Cys-845 is the For EPSP synthase activity of the active site. The segment at 882–1071 (VVLIGMRAAG…VPVKRSTFVC (190 aa)) is shikimate kinase. 886-893 (GMRAAGKS) serves as a coordination point for ATP. The interval 1072–1284 (LTFQNLLPEM…AAPGQLTLRQ (213 aa)) is 3-dehydroquinase. His-1189 (proton acceptor; for 3-dehydroquinate dehydratase activity) is an active-site residue. Catalysis depends on Lys-1218, which acts as the Schiff-base intermediate with substrate; for 3-dehydroquinate dehydratase activity. The tract at residues 1297 to 1577 (PKKMFVVGSP…APVYDAVTQE (281 aa)) is shikimate dehydrogenase.

This sequence in the N-terminal section; belongs to the sugar phosphate cyclases superfamily. Dehydroquinate synthase family. The protein in the 2nd section; belongs to the EPSP synthase family. It in the 3rd section; belongs to the shikimate kinase family. In the 4th section; belongs to the type-I 3-dehydroquinase family. This sequence in the C-terminal section; belongs to the shikimate dehydrogenase family. In terms of assembly, homodimer. The cofactor is Zn(2+).

The protein localises to the cytoplasm. The enzyme catalyses 7-phospho-2-dehydro-3-deoxy-D-arabino-heptonate = 3-dehydroquinate + phosphate. It carries out the reaction 3-dehydroquinate = 3-dehydroshikimate + H2O. The catalysed reaction is shikimate + NADP(+) = 3-dehydroshikimate + NADPH + H(+). It catalyses the reaction shikimate + ATP = 3-phosphoshikimate + ADP + H(+). The enzyme catalyses 3-phosphoshikimate + phosphoenolpyruvate = 5-O-(1-carboxyvinyl)-3-phosphoshikimate + phosphate. It functions in the pathway metabolic intermediate biosynthesis; chorismate biosynthesis; chorismate from D-erythrose 4-phosphate and phosphoenolpyruvate: step 2/7. The protein operates within metabolic intermediate biosynthesis; chorismate biosynthesis; chorismate from D-erythrose 4-phosphate and phosphoenolpyruvate: step 3/7. Its pathway is metabolic intermediate biosynthesis; chorismate biosynthesis; chorismate from D-erythrose 4-phosphate and phosphoenolpyruvate: step 4/7. It participates in metabolic intermediate biosynthesis; chorismate biosynthesis; chorismate from D-erythrose 4-phosphate and phosphoenolpyruvate: step 5/7. It functions in the pathway metabolic intermediate biosynthesis; chorismate biosynthesis; chorismate from D-erythrose 4-phosphate and phosphoenolpyruvate: step 6/7. Functionally, the AROM polypeptide catalyzes 5 consecutive enzymatic reactions in prechorismate polyaromatic amino acid biosynthesis. This chain is Pentafunctional AROM polypeptide, found in Eremothecium gossypii (strain ATCC 10895 / CBS 109.51 / FGSC 9923 / NRRL Y-1056) (Yeast).